A 131-amino-acid chain; its full sequence is Profilin (131 aa).

It belongs to the profilin family. In terms of assembly, occurs in many kinds of cells as a complex with monomeric actin in a 1:1 ratio.

The protein localises to the cytoplasm. It is found in the cytoskeleton. Functionally, binds to actin and affects the structure of the cytoskeleton. At high concentrations, profilin prevents the polymerization of actin, whereas it enhances it at low concentrations. By binding to PIP2, it inhibits the formation of IP3 and DG. This Fragaria ananassa (Strawberry) protein is Profilin.